A 183-amino-acid polypeptide reads, in one-letter code: Glutathione-regulated potassium-efflux system ancillary protein KefG (183 aa).

Belongs to the NAD(P)H dehydrogenase (quinone) family. KefG subfamily. Interacts with KefB.

Its subcellular location is the cell inner membrane. It catalyses the reaction a quinone + NADH + H(+) = a quinol + NAD(+). The enzyme catalyses a quinone + NADPH + H(+) = a quinol + NADP(+). Regulatory subunit of a potassium efflux system that confers protection against electrophiles. Required for full activity of KefB. The polypeptide is Glutathione-regulated potassium-efflux system ancillary protein KefG (Yersinia pestis bv. Antiqua (strain Angola)).